A 347-amino-acid polypeptide reads, in one-letter code: Quinolinate synthase (347 aa).

Positions 47 and 68 each coordinate iminosuccinate. Cysteine 113 contacts [4Fe-4S] cluster. Residues 139–141 (YAN) and serine 156 each bind iminosuccinate. Cysteine 200 is a [4Fe-4S] cluster binding site. Residues 226 to 228 (HPE) and threonine 243 each bind iminosuccinate. Position 297 (cysteine 297) interacts with [4Fe-4S] cluster.

The protein belongs to the quinolinate synthase family. Type 1 subfamily. The cofactor is [4Fe-4S] cluster.

The protein localises to the cytoplasm. The catalysed reaction is iminosuccinate + dihydroxyacetone phosphate = quinolinate + phosphate + 2 H2O + H(+). It functions in the pathway cofactor biosynthesis; NAD(+) biosynthesis; quinolinate from iminoaspartate: step 1/1. Catalyzes the condensation of iminoaspartate with dihydroxyacetone phosphate to form quinolinate. This chain is Quinolinate synthase, found in Shigella flexneri.